Here is a 204-residue protein sequence, read N- to C-terminus: N-(5'-phosphoribosyl)anthranilate isomerase (204 aa).

This sequence belongs to the TrpF family.

The catalysed reaction is N-(5-phospho-beta-D-ribosyl)anthranilate = 1-(2-carboxyphenylamino)-1-deoxy-D-ribulose 5-phosphate. It functions in the pathway amino-acid biosynthesis; L-tryptophan biosynthesis; L-tryptophan from chorismate: step 3/5. The protein is N-(5'-phosphoribosyl)anthranilate isomerase of Pseudomonas fluorescens (strain Pf0-1).